Reading from the N-terminus, the 289-residue chain is Fatty acid elongase 3-like (289 aa).

The next 7 membrane-spanning stretches (helical) occupy residues 35–55 (SFLFTSISLYIAVSSSLHILL), 75–95 (SLLMSILSATIFAGILLSAAA), 129–149 (VFFWSYVFYLTRFLHMFRTIF), 157–176 (LAVSQLFCNSVMAFTSFLWL), 181–203 (SYQILAILSTTLVYSVVYGYRFW), 205–225 (GFGLPGSAFPSFVVNCQLVLV), and 248–268 (IGAWGLNSVLNGAILLLFLNF).

The protein belongs to the ELO family.

It is found in the membrane. Its function is as follows. Probable very long-chain fatty acid (VLCFA) elongase that controls VLCFA composition and functions to inhibit abscisic acid (ABA)-mediated stress responses, including regulation of stomatal aperture, maintenance of primary root growth and inhibition of germination. VLCFA pathway and products may function as signaling components acting upstream of sphingosine-1-phosphate, ceramide and the heterotrimeric G-protein complex, in lipid-mediated regulation of abiotic stress signaling. The polypeptide is Fatty acid elongase 3-like (HOS3) (Arabidopsis thaliana (Mouse-ear cress)).